A 1240-amino-acid polypeptide reads, in one-letter code: DNA polymerase catalytic subunit (1240 aa).

Low complexity predominate over residues 1–22; the sequence is MFCAAGGPASPGGKPAARAASG. Disordered regions lie at residues 1–44, 646–695, and 1103–1139; these read MFCA…RRQN, GLDK…RETG, and AAAPGDEPAPPAALPSPAKRPRETPSHADPPGGASKP. Residues 669-688 show a composition bias toward acidic residues; it reads NGDEDKDDDEDGDEDGDERE.

This sequence belongs to the DNA polymerase type-B family. As to quaternary structure, forms a complex with the ssDNA-binding protein UL29, the DNA polymerase processivity factor, and the alkaline exonuclease. Interacts with the putative helicase-primase complex subunit UL8; this interaction may coordinate leading and lagging strand DNA synthesis at the replication fork.

The protein resides in the host nucleus. The catalysed reaction is DNA(n) + a 2'-deoxyribonucleoside 5'-triphosphate = DNA(n+1) + diphosphate. The enzyme catalyses Endonucleolytic cleavage to 5'-phosphomonoester.. Its function is as follows. Replicates viral genomic DNA. The replication complex is composed of six viral proteins: the DNA polymerase, processivity factor, primase, primase-associated factor, helicase, and ssDNA-binding protein. Additionally, the polymerase contains an intrinsic ribonuclease H (RNase H) activity that specifically degrades RNA/DNA heteroduplexes or duplex DNA substrates in the 5' to 3' direction. Therefore, it can catalyze the excision of the RNA primers that initiate the synthesis of Okazaki fragments at a replication fork during viral DNA replication. The chain is DNA polymerase catalytic subunit from Human herpesvirus 2 (strain HG52) (HHV-2).